The primary structure comprises 243 residues: 35 kDa gas vesicle protein (243 aa).

Belongs to the gas vesicle GvpC family.

Its subcellular location is the gas vesicle shell. Its function is as follows. May confer stability to the gas vesicle shells. Gas vesicles are small, hollow, gas filled protein structures that are found in several microbial planktonic microorganisms. They allow the positioning of the organism at the favorable depth for growth. This Dactylococcopsis salina (strain PCC 8305) (Myxobactron salinum) protein is 35 kDa gas vesicle protein.